A 306-amino-acid chain; its full sequence is tRNA dimethylallyltransferase (306 aa).

An ATP-binding site is contributed by 9 to 16; sequence GPTGIGKT. 11 to 16 is a binding site for substrate; that stretch reads TGIGKT. Positions 34-37 are interaction with substrate tRNA; that stretch reads DSMQ.

The protein belongs to the IPP transferase family. As to quaternary structure, monomer. Mg(2+) serves as cofactor.

It catalyses the reaction adenosine(37) in tRNA + dimethylallyl diphosphate = N(6)-dimethylallyladenosine(37) in tRNA + diphosphate. Functionally, catalyzes the transfer of a dimethylallyl group onto the adenine at position 37 in tRNAs that read codons beginning with uridine, leading to the formation of N6-(dimethylallyl)adenosine (i(6)A). This Lactobacillus johnsonii (strain CNCM I-12250 / La1 / NCC 533) protein is tRNA dimethylallyltransferase.